Reading from the N-terminus, the 20-residue chain is Haemoporin (20 aa).

Residues 1–20 (AAVPEAAAEATAEAAPVSEF) are disordered.

As to quaternary structure, homopentamer. Forms a cylindrical structure with a central pore. Detected in the hemolymph.

It localises to the secreted. In Aplysia californica (California sea hare), this protein is Haemoporin.